We begin with the raw amino-acid sequence, 133 residues long: MVDAFVGTWKLVDSKNFDDYMKSLGVGFATRQVGNMTKPTTIIEVNGDTVIIKTQSTFKNTEISFKLGVEFDETTADDRKVKSIVTLDGGKLVHVQKWNGQETSLVREMVDGKLILTLTHGTAVCTRTYEKQA.

V2 is modified (N-acetylvaline). T8 bears the Phosphothreonine mark. Phosphotyrosine; by Tyr-kinases is present on Y20. Position 23 is a phosphoserine (S23). The residue at position 30 (T30) is a Phosphothreonine. Position 83 is a phosphoserine (S83). 127–129 (RTY) is a (9Z)-octadecenoate binding site. 127-129 (RTY) contributes to the hexadecanoate binding site. 127–129 (RTY) contributes to the octadecanoate binding site.

Belongs to the calycin superfamily. Fatty-acid binding protein (FABP) family.

It is found in the cytoplasm. In terms of biological role, FABPs are thought to play a role in the intracellular transport of long-chain fatty acids and their acyl-CoA esters. In Bos mutus grunniens (Wild yak), this protein is Fatty acid-binding protein, heart (FABP3).